The primary structure comprises 735 residues: Catalase-peroxidase (735 aa).

Polar residues-rich tracts occupy residues 1–10 (MENQNRQNAA) and 17–26 (SVTNQSSNRT). A disordered region spans residues 1–30 (MENQNRQNAAQCPFHGSVTNQSSNRTTNKD). The segment at residues 100 to 223 (WHSAGTYRIG…LAAVQMGLIY (124 aa)) is a cross-link (tryptophyl-tyrosyl-methioninium (Trp-Tyr) (with M-249)). Catalysis depends on His-101, which acts as the Proton acceptor. Positions 223-249 (YVNPEGPDGKPDPKAAARDIRETFRRM) form a cross-link, tryptophyl-tyrosyl-methioninium (Tyr-Met) (with W-100). His-264 contributes to the heme b binding site.

The protein belongs to the peroxidase family. Peroxidase/catalase subfamily. In terms of assembly, homodimer or homotetramer. Heme b serves as cofactor. Post-translationally, formation of the three residue Trp-Tyr-Met cross-link is important for the catalase, but not the peroxidase activity of the enzyme.

It catalyses the reaction H2O2 + AH2 = A + 2 H2O. The enzyme catalyses 2 H2O2 = O2 + 2 H2O. Its function is as follows. Bifunctional enzyme with both catalase and broad-spectrum peroxidase activity. Also displays NADH oxidase, INH lyase and isonicotinoyl-NAD synthase activities. The polypeptide is Catalase-peroxidase (Geobacillus stearothermophilus (Bacillus stearothermophilus)).